A 1215-amino-acid chain; its full sequence is Endoplasmic reticulum transmembrane helix translocase (1215 aa).

Over 1–27 (MTKKSFVSSPIVRDSTLLVPKSLIAKP) the chain is Cytoplasmic. The chain crosses the membrane as a helical span at residues 28–43 (YVLPFFPLYATFAQLY). Residues 44 to 56 (FQQYDRYIKGPEW) lie on the Lumenal side of the membrane. A helical membrane pass occupies residues 57 to 76 (TFVYLGTLVSLNILVMLMPA). The Cytoplasmic portion of the chain corresponds to 77–188 (WNVKIKAKFN…ENSFDIPIPT (112 aa)). The segment at 156-185 (KIGDFQKCKGHSGDLTHLKRLYGENSFDIP) is A-domain; part 1. Residues 189–216 (FMELFKEHAVAPLFVFQVFCVALWLLDE) form a helical membrane-spanning segment. A topological domain (lumenal) is located at residue Phe-217. The helical transmembrane segment at 218-246 (WYYSLFNLFMIISMEAAAVFQRLTALKEF) threads the bilayer. Residues 247–395 (RTMGIKPYTI…IYSAERVSVD (149 aa)) are Cytoplasmic-facing. The A-domain; part 2 stretch occupies residues 250 to 390 (GIKPYTINVF…LVRVMIYSAE (141 aa)). Phosphoserine is present on Ser-324. Residues 396 to 425 (NKEALMFILFLLIFAVIASWYVWVEGTKMG) traverse the membrane as a helical segment. Over 426–427 (RI) the chain is Lumenal. Helical transmembrane passes span 428–442 (QSKL…ITSV) and 446–464 (ELPM…ALAK). Residues 465–971 (FYVYCTEPFR…APFTSKLANV (507 aa)) lie on the Cytoplasmic side of the membrane. Residues 466–495 (YVYCTEPFRIPFAGRIDVCCFDKTGTLTGE) form a P-domain; part 1 region. Asp-487 functions as the 4-aspartylphosphate intermediate in the catalytic mechanism. Mg(2+)-binding residues include Asp-487 and Thr-489. ATP contacts are provided by residues 487-489 (DKT), Phe-582, Arg-634, Asp-699, and 816-820 (DGTND). The interval 497 to 674 (LVFEGLAGIS…FNGFLIFHCP (178 aa)) is N-domain. A P-domain; part 2 region spans residues 677-837 (DDAIETIKML…HVGIALLNGT (161 aa)). Asp-816 contacts Mg(2+). The arm-like stretch occupies residues 838–953 (EEGLKKLGEQ…DAQGDEAPAL (116 aa)). The residue at position 936 (Ser-936) is a Phosphoserine. Residues 954-969 (KLGDASCAAPFTSKLA) are P-domain; part 3. A helical transmembrane segment spans residues 972 to 1011 (SAVTNIIRQGRCALVNTIQMYKILALNCLISAYSLSIIYM). Residues 1012–1017 (AGVKFG) are Lumenal-facing. The helical transmembrane segment at 1018–1035 (DGQATVSGLLLSVCFLSI) threads the bilayer. Over 1036–1055 (SRGKPLEKLSKQRPQSGIFN) the chain is Cytoplasmic. The chain crosses the membrane as a helical span at residues 1056–1084 (VYIMGSILSQFAVHIATLVYITTEIYKLE). Residues 1085–1099 (PREPQVDLEKEFAPS) are Lumenal-facing. The helical transmembrane segment at 1100-1121 (LLNTGIFIIQLVQQVSTFAVNY) threads the bilayer. Over 1122–1133 (QGEPFRENIRSN) the chain is Cytoplasmic. A helical membrane pass occupies residues 1134–1151 (KGMYYGLLGVTGLALASA). Residues 1152 to 1168 (TEFLPELNEAMKFVPMT) are Lumenal-facing. The helical transmembrane segment at 1169–1197 (DDFKIKLTLTLLLDFFGSWGVEHFFKFFF) threads the bilayer. Residues 1198-1215 (MDDKPSDISVQQVKIASK) are Cytoplasmic-facing.

Belongs to the cation transport ATPase (P-type) (TC 3.A.3) family. Type V subfamily. Mg(2+) is required as a cofactor.

The protein resides in the endoplasmic reticulum membrane. The enzyme catalyses [protein]-with a C-terminal TM segment(out) + ATP + H2O = [protein]-with a C-terminal TM segment(in) + ADP + phosphate + H(+). Its activity is regulated as follows. The ATPase activity is stimulated by phosphatidylinositol 4-phosphate (PI4P). Functionally, endoplasmic reticulum translocase required to remove mitochondrial transmembrane proteins mistargeted to the endoplasmic reticulum. Acts as a dislocase that mediates the ATP-dependent extraction of mislocalized mitochondrial transmembrane proteins from the endoplasmic reticulum membrane. Specifically binds mitochondrial tail-anchored transmembrane proteins: has an atypically large substrate-binding pocket that recognizes and binds moderately hydrophobic transmembranes with short hydrophilic lumenal domains. This Saccharomyces cerevisiae (strain ATCC 204508 / S288c) (Baker's yeast) protein is Endoplasmic reticulum transmembrane helix translocase.